The primary structure comprises 317 residues: MSIFDWFAKQEKSEPPIQQQQKEREIADGLWTKCVACTALTYTKDLQANQLVCTECGHHFRVESSERIAQLMDKNTWKPLNDHLTPTDPLKFCDRKPYSDRIKDTQEKTGLVDAVQTGTGLIDGLPLALGVMDFRFMGGSMGSVVGEKLCRLIEYATQERLPVVIVCASGGARMQEGMLSLMQMAKISGALERHRNAKLLYIPVLTHPTTGGVTASFAMLGDLIIAEPNATIGFAGRRVIEQTLREKLPDGFQTSEYLLKHGFVDAIVSRTQLKKTLAQLISIHQPFFPVLPPLNVREKHHHHHSEEVVLKMDGKEE.

Residues 30 to 299 (LWTKCVACTA…VLPPLNVREK (270 aa)) form the CoA carboxyltransferase N-terminal domain. Zn(2+) is bound by residues C34, C37, C53, and C56. Residues 34–56 (CVACTALTYTKDLQANQLVCTEC) form a C4-type zinc finger.

The protein belongs to the AccD/PCCB family. In terms of assembly, acetyl-CoA carboxylase is a heterohexamer composed of biotin carboxyl carrier protein (AccB), biotin carboxylase (AccC) and two subunits each of ACCase subunit alpha (AccA) and ACCase subunit beta (AccD). Zn(2+) serves as cofactor.

It is found in the cytoplasm. It carries out the reaction N(6)-carboxybiotinyl-L-lysyl-[protein] + acetyl-CoA = N(6)-biotinyl-L-lysyl-[protein] + malonyl-CoA. It functions in the pathway lipid metabolism; malonyl-CoA biosynthesis; malonyl-CoA from acetyl-CoA: step 1/1. Functionally, component of the acetyl coenzyme A carboxylase (ACC) complex. Biotin carboxylase (BC) catalyzes the carboxylation of biotin on its carrier protein (BCCP) and then the CO(2) group is transferred by the transcarboxylase to acetyl-CoA to form malonyl-CoA. This chain is Acetyl-coenzyme A carboxylase carboxyl transferase subunit beta, found in Crocosphaera subtropica (strain ATCC 51142 / BH68) (Cyanothece sp. (strain ATCC 51142)).